The chain runs to 658 residues: MDSLLGCGVSAAAREPVPRYLTSQPRVSEVAMQSAPLEQPAKRPRCDGSPRTPPSTPPATANLSADDDFQNTDLRTWEPEDVCSFLENRGFREKKVLDIFRDNKIAGSFLPFLDEDRLEDLGVSSLEERKKMIECIQQLSQSRIDLMKVFNDPIHGHIEFHPLLIRIIDTPQFQRLRYIKQLGGGYYVFPGASHNRFEHSLGVGYLAGCLVRALAEKQPELQISERDILCVQIAGLCHDLGHGPFSHMFDGRFIPRARPEKKWKHEQGSIEMFEHLVNSNELKLVMKNYGLVPEEDITFIKEQIMGPPITPVKDSLWPYKGRPATKSFLYEIVSNKRNGIDVDKWDYFARDCHHLGIQNNFDYKRFIKFARICEVEYKVKEDKTYIRKVKHICSREKEVGNLYDMFHTRNCLHRRAYQHKISNLIDIMITDAFLKADPYVEITGTAGKKFRISTAIDDMEAFTKLTDNIFLEVLHSTDPQLSEAQSILRNIECRNLYKYLGETQPKREKIRKEEYERLPQEVAKAKPEKAPDVELKAEDFIVDVINVDYGMEDKNPIDRVHFYCKSNSKQAVRINKEQVSQLLPEKFAEQLIRVYCKKKDGKSLDAAGKHFVQWCALRDFTKPQDGDIIAPLITPLKWNNKTSSCLQEVSKVKTCLKF.

Residues 23–68 (SQPRVSEVAMQSAPLEQPAKRPRCDGSPRTPPSTPPATANLSADDD) form a disordered region. Serine 49 bears the Phosphoserine mark. Threonine 52 carries the post-translational modification Phosphothreonine. Serine 55 carries the post-translational modification Phosphoserine. Threonine 56 is subject to Phosphothreonine. 2 positions are modified to phosphoserine: serine 64 and serine 125. The SAM domain occupies 77–142 (WEPEDVCSFL…IECIQQLSQS (66 aa)). Residues lysine 148 and valine 149 each coordinate GTP. A dGTP-binding site is contributed by asparagine 151. The GTP site is built by aspartate 169, glutamine 174, and arginine 177. The dGTP site is built by leucine 182 and valine 188. Residues 196–348 (RFEHSLGVGY…GIDVDKWDYF (153 aa)) enclose the HD domain. Mn(2+)-binding residues include histidine 199, histidine 238, and aspartate 239. Residues aspartate 239, histidine 247, histidine 265, and glutamate 266 each coordinate dGTP. The active site involves histidine 265. Aspartate 343 lines the Mn(2+) pocket. 9 residues coordinate dGTP: tyrosine 347, aspartate 351, arginine 365, arginine 395, lysine 397, asparagine 401, tyrosine 417, histidine 419, and lysine 420. GTP is bound by residues arginine 494 and lysine 498. Lysine 509 is covalently cross-linked (Glycyl lysine isopeptide (Lys-Gly) (interchain with G-Cter in SUMO2)). Lysine 565 contacts GTP. Lysine 565 is a dGTP binding site. Phosphothreonine is present on threonine 634. Threonine 634 bears the (Microbial infection) Phosphothreonine mark.

The protein belongs to the SAMHD1 family. As to quaternary structure, homodimer; in absence of GTP and dNTP. Homotetramer; in GTP- and dNTP-bound form. Interacts with MRE11; leading to stimulate the exonuclease activity of MRE11. Interacts with RBBP8/CtIP. Interacts with RBBP8/CtIP. Interacts (via its C-terminus) with CD81. Requires Zn(2+) as cofactor. In terms of processing, phosphorylation at Thr-634 by CDK1 acts as a switch to control deoxynucleoside triphosphate (dNTPase)-dependent and -independent functions. Phosphorylation at Thr-634 takes place in cycling cells: it reduces the stability of the homotetramer, impairing the dNTPase activity and subsequent ability to restrict infection by viruses. It also inhibits ability to suppress LINE-1 retrotransposon activity. In contrast, phosphorylation at Thr-634 promotes DNA end resection at stalled replication forks in response to DNA damage. (Microbial infection) Phosphorylation at Thr-634 by mouse cytomegalovirus kinase M97 leads to a reduced level of dNTP hydrolase activity and the loss of viral restriction. Post-translationally, not phosphorylated by CDK1 at the C-terminus.

It localises to the nucleus. The protein resides in the chromosome. The enzyme catalyses a 2'-deoxyribonucleoside 5'-triphosphate + H2O = a 2'-deoxyribonucleoside + triphosphate + H(+). It catalyses the reaction dATP + H2O = 2'-deoxyadenosine + triphosphate + H(+). The catalysed reaction is dCTP + H2O = 2'-deoxycytidine + triphosphate + H(+). It carries out the reaction dGTP + H2O = 2'-deoxyguanosine + triphosphate + H(+). The enzyme catalyses dTTP + H2O = thymidine + triphosphate + H(+). Its activity is regulated as follows. Allosterically activated and regulated via the combined actions of GTP and dNTPs (dATP, dGTP, dTTP and dCTP): Allosteric site 1 binds GTP, while allosteric site 2 binds dNTP. Allosteric activation promotes the formation of highly active homotetramers. Isoform 1: Phosphorylation at Thr-634 impairs homotetramerization, thereby inhibiting dNTPase activity, leading to reduced ability to restrict infection by viruses. Functionally, protein that acts both as a host restriction factor involved in defense response to virus and as a regulator of DNA end resection at stalled replication forks. Has deoxynucleoside triphosphate (dNTPase) activity, which is required to restrict infection by viruses: dNTPase activity reduces cellular dNTP levels to levels too low for retroviral reverse transcription to occur, blocking early-stage virus replication in dendritic and other myeloid cells. Likewise, suppresses LINE-1 retrotransposon activity. In addition to virus restriction, dNTPase activity acts as a regulator of DNA precursor pools by regulating dNTP pools. Phosphorylation at Thr-634 acts as a switch to control dNTPase-dependent and -independent functions: it inhibits dNTPase activity and ability to restrict infection by viruses, while it promotes DNA end resection at stalled replication forks. Functions during S phase at stalled DNA replication forks to promote the resection of gapped or reversed forks: acts by stimulating the exonuclease activity of MRE11, activating the ATR-CHK1 pathway and allowing the forks to restart replication. Its ability to promote degradation of nascent DNA at stalled replication forks is required to prevent induction of type I interferons, thereby preventing chronic inflammation. Ability to promote DNA end resection at stalled replication forks is independent of dNTPase activity. Enhances immunoglobulin hypermutation in B-lymphocytes by promoting transversion mutation. The sequence is that of Deoxynucleoside triphosphate triphosphohydrolase SAMHD1 from Mus musculus (Mouse).